Here is a 160-residue protein sequence, read N- to C-terminus: Sec-independent protein translocase protein TatB (160 aa).

A helical transmembrane segment spans residues 1–21; the sequence is MFGMGFFEILVVLVVAIIFLG. The segment at 118–160 is disordered; sequence HLNEEVSNEEALNKEVSSDESPKEVQLATDNNTKEHDKEKEHV. 2 stretches are compositionally biased toward basic and acidic residues: residues 128 to 140 and 149 to 160; these read ALNK…ESPK and NTKEHDKEKEHV.

The protein belongs to the TatB family. In terms of assembly, the Tat system comprises two distinct complexes: a TatABC complex, containing multiple copies of TatA, TatB and TatC subunits, and a separate TatA complex, containing only TatA subunits. Substrates initially bind to the TatABC complex, which probably triggers association of the separate TatA complex to form the active translocon.

Its subcellular location is the cell inner membrane. Part of the twin-arginine translocation (Tat) system that transports large folded proteins containing a characteristic twin-arginine motif in their signal peptide across membranes. Together with TatC, TatB is part of a receptor directly interacting with Tat signal peptides. TatB may form an oligomeric binding site that transiently accommodates folded Tat precursor proteins before their translocation. This is Sec-independent protein translocase protein TatB from Helicobacter pylori (strain HPAG1).